A 170-amino-acid chain; its full sequence is Large ribosomal subunit protein uL10 (170 aa).

It belongs to the universal ribosomal protein uL10 family. As to quaternary structure, part of the ribosomal stalk of the 50S ribosomal subunit. The N-terminus interacts with L11 and the large rRNA to form the base of the stalk. The C-terminus forms an elongated spine to which L12 dimers bind in a sequential fashion forming a multimeric L10(L12)X complex.

Functionally, forms part of the ribosomal stalk, playing a central role in the interaction of the ribosome with GTP-bound translation factors. This is Large ribosomal subunit protein uL10 from Fusobacterium nucleatum subsp. nucleatum (strain ATCC 25586 / DSM 15643 / BCRC 10681 / CIP 101130 / JCM 8532 / KCTC 2640 / LMG 13131 / VPI 4355).